Reading from the N-terminus, the 449-residue chain is Tryptophan--tRNA ligase (449 aa).

ATP is bound by residues 10–12 and 18–19; these read TTT and GN. The short motif at 11 to 19 is the 'HIGH' region element; the sequence is TTGTPHLGN. Aspartate 143 contacts L-tryptophan. Residues 155–157, leucine 197, and 204–208 contribute to the ATP site; these read GRD and KMSKS. The 'KMSKS' region signature appears at 204–208; sequence KMSKS.

It belongs to the class-I aminoacyl-tRNA synthetase family. As to quaternary structure, homodimer.

Its subcellular location is the cytoplasm. It catalyses the reaction tRNA(Trp) + L-tryptophan + ATP = L-tryptophyl-tRNA(Trp) + AMP + diphosphate + H(+). Catalyzes the attachment of tryptophan to tRNA(Trp). This chain is Tryptophan--tRNA ligase, found in Pseudomonas syringae pv. tomato (strain ATCC BAA-871 / DC3000).